The sequence spans 154 residues: MKLKILWVGKTQEEWLRRGIDEYTGRIRRYTPLEIAEAREEKGAAAEAMRTRECERLEKLVPKNARLVLLDERGDQLTSPELAAFMGKCRDSAVPEMVFAIGGAYGFADSFRARADRVLALSRLTFTHQMVRVILLEQIYRAHTILNGEPYHHS.

S-adenosyl-L-methionine is bound by residues leucine 70, glycine 102, and 121–126 (LSRLTF).

It belongs to the RNA methyltransferase RlmH family. As to quaternary structure, homodimer.

It localises to the cytoplasm. It carries out the reaction pseudouridine(1915) in 23S rRNA + S-adenosyl-L-methionine = N(3)-methylpseudouridine(1915) in 23S rRNA + S-adenosyl-L-homocysteine + H(+). Specifically methylates the pseudouridine at position 1915 (m3Psi1915) in 23S rRNA. The protein is Ribosomal RNA large subunit methyltransferase H of Geobacter metallireducens (strain ATCC 53774 / DSM 7210 / GS-15).